Here is a 294-residue protein sequence, read N- to C-terminus: Proteasome subunit beta 1 (294 aa).

Residues 1–65 constitute a propeptide, removed in mature form; by autocatalysis; it reads MTADRPALRT…MESGDLAPHG (65 aa). The Nucleophile role is filled by Thr66.

Belongs to the peptidase T1B family. The 20S proteasome core is composed of 14 alpha and 14 beta subunits that assemble into four stacked heptameric rings, resulting in a barrel-shaped structure. The two inner rings, each composed of seven catalytic beta subunits, are sandwiched by two outer rings, each composed of seven alpha subunits. All four combinations of alpha- and beta-subunits (beta2-alpha1, beta2-alpha2, beta1-alpha2 and beta1-alpha1) yield fully assembled and proteolytically active proteasomes. The catalytic chamber with the active sites is on the inside of the barrel. Has probably a gated structure, the ends of the cylinder being occluded by the N-termini of the alpha-subunits. Is likely capped by the proteasome-associated ATPase, ARC.

Its subcellular location is the cytoplasm. The catalysed reaction is Cleavage of peptide bonds with very broad specificity.. It functions in the pathway protein degradation; proteasomal Pup-dependent pathway. The formation of the proteasomal ATPase ARC-20S proteasome complex, likely via the docking of the C-termini of ARC into the intersubunit pockets in the alpha-rings, may trigger opening of the gate for substrate entry. Interconversion between the open-gate and close-gate conformations leads to a dynamic regulation of the 20S proteasome proteolysis activity. Component of the proteasome core, a large protease complex with broad specificity involved in protein degradation. The R.erythropolis proteasomes are able to cleave oligopeptides after Tyr, Phe and Leu, very poorly after Arg but not after Glu. Thus, displays chymotrypsin-like activity, low trypsin-like activity but no caspase-like activity. This chain is Proteasome subunit beta 1, found in Rhodococcus erythropolis (Arthrobacter picolinophilus).